Reading from the N-terminus, the 81-residue chain is MVCIPCIVIPLLLWVYKRFLEPFLYPIISPIINTFWTKKAVQETAASDQKVSEKSNGTCKPESNGEATANGSTIAADKKTD.

Residues 45–58 show a composition bias toward polar residues; it reads AASDQKVSEKSNGT. The interval 45-81 is disordered; it reads AASDQKVSEKSNGTCKPESNGEATANGSTIAADKKTD.

Belongs to the UPF0729 family.

In Anoplopoma fimbria (Sablefish), this protein is UPF0729 protein C18orf32 homolog.